Consider the following 461-residue polypeptide: Cysteine--tRNA ligase (461 aa).

Residue C28 participates in Zn(2+) binding. Residues 30-40 carry the 'HIGH' region motif; the sequence is VTIYDLCHIGH. Zn(2+)-binding residues include C211, H236, and E240. A 'KMSKS' region motif is present at residues 268-272; sequence KMSKS. Position 271 (K271) interacts with ATP.

The protein belongs to the class-I aminoacyl-tRNA synthetase family. Monomer. It depends on Zn(2+) as a cofactor.

Its subcellular location is the cytoplasm. It carries out the reaction tRNA(Cys) + L-cysteine + ATP = L-cysteinyl-tRNA(Cys) + AMP + diphosphate. The sequence is that of Cysteine--tRNA ligase from Aliivibrio fischeri (strain ATCC 700601 / ES114) (Vibrio fischeri).